The chain runs to 723 residues: Tripartite motif-containing protein 42 (723 aa).

The RING-type zinc finger occupies 146–192 (CPMCNRLRLHSFMLPCNHSLCEKCLRQLQKHAEVTENFFILICPMCS). 2 B box-type zinc fingers span residues 235 to 280 (PILC…FVDT) and 285 to 326 (QDEK…TVSL). Zn(2+) contacts are provided by Cys-290, His-293, Cys-313, and His-318. Residues 382–412 (KLRAILQEKEKIIMEQIENLEVSRQKEIEKY) are a coiled coil. The region spanning 434–492 (LKETGQVAFLQSAKILVDQIEEGIQNTFRPDPQLRLHSLHCIPLDFAELSNAIHELFPT) is the COS domain. A Fibronectin type-III domain is found at 603–701 (TPGPIVIYQT…DICKVVTPDG (99 aa)).

The protein belongs to the TRIM/RBCC family.

The chain is Tripartite motif-containing protein 42 (Trim42) from Mus musculus (Mouse).